A 378-amino-acid chain; its full sequence is mRNA cap guanine-N(7) methyltransferase (378 aa).

In terms of domain architecture, mRNA cap 0 methyltransferase spans 24-331 (SRIFFMRNMN…MYLVFGFRKK (308 aa)). 33 to 34 (NN) lines the mRNA pocket. S-adenosyl-L-methionine-binding residues include Lys37, Ala62, Asp84, Asp116, Gln138, and Tyr143. Composition is skewed to basic and acidic residues over residues 335 to 347 (EKNL…EIKK) and 356 to 378 (DTDK…PSHC). The segment at 335–378 (EKNLESEAPEIKKVTPVPLNEDTDKTAEKNEERIEEKEENPSHC) is disordered.

The protein belongs to the class I-like SAM-binding methyltransferase superfamily. mRNA cap 0 methyltransferase family.

The protein resides in the nucleus. The enzyme catalyses a 5'-end (5'-triphosphoguanosine)-ribonucleoside in mRNA + S-adenosyl-L-methionine = a 5'-end (N(7)-methyl 5'-triphosphoguanosine)-ribonucleoside in mRNA + S-adenosyl-L-homocysteine. In terms of biological role, mRNA-capping methyltransferase that methylates the N7 position of the added guanosine to the 5'-cap structure of mRNAs. Binds RNA containing 5'-terminal GpppC. This Caenorhabditis briggsae protein is mRNA cap guanine-N(7) methyltransferase.